Reading from the N-terminus, the 343-residue chain is Methionine import ATP-binding protein MetN (343 aa).

Positions 2–241 (ITLSHITKQF…PKTPLAQAFI (240 aa)) constitute an ABC transporter domain. ATP is bound at residue 38–45 (GASGAGKS).

The protein belongs to the ABC transporter superfamily. Methionine importer (TC 3.A.1.24) family. The complex is composed of two ATP-binding proteins (MetN), two transmembrane proteins (MetI) and a solute-binding protein (MetQ).

It is found in the cell inner membrane. The catalysed reaction is L-methionine(out) + ATP + H2O = L-methionine(in) + ADP + phosphate + H(+). The enzyme catalyses D-methionine(out) + ATP + H2O = D-methionine(in) + ADP + phosphate + H(+). Functionally, part of the ABC transporter complex MetNIQ involved in methionine import. Responsible for energy coupling to the transport system. The protein is Methionine import ATP-binding protein MetN of Sodalis glossinidius (strain morsitans).